We begin with the raw amino-acid sequence, 874 residues long: Alanine--tRNA ligase (874 aa).

Residues histidine 562, histidine 566, cysteine 664, and histidine 668 each coordinate Zn(2+).

Belongs to the class-II aminoacyl-tRNA synthetase family. The cofactor is Zn(2+).

The protein resides in the cytoplasm. It carries out the reaction tRNA(Ala) + L-alanine + ATP = L-alanyl-tRNA(Ala) + AMP + diphosphate. Functionally, catalyzes the attachment of alanine to tRNA(Ala) in a two-step reaction: alanine is first activated by ATP to form Ala-AMP and then transferred to the acceptor end of tRNA(Ala). Also edits incorrectly charged Ser-tRNA(Ala) and Gly-tRNA(Ala) via its editing domain. The chain is Alanine--tRNA ligase from Shewanella denitrificans (strain OS217 / ATCC BAA-1090 / DSM 15013).